We begin with the raw amino-acid sequence, 397 residues long: Enoyl-[acyl-carrier-protein] reductase [NADH] (397 aa).

NAD(+) contacts are provided by residues 48–53, 74–75, 111–112, and 139–140; these read GASTGY, FE, DA, and VA. A substrate-binding site is contributed by Tyr-225. Catalysis depends on Tyr-235, which acts as the Proton donor. Residues Lys-244 and 273–275 each bind NAD(+); that span reads VVT.

The protein belongs to the TER reductase family. As to quaternary structure, monomer.

It catalyses the reaction a 2,3-saturated acyl-[ACP] + NAD(+) = a (2E)-enoyl-[ACP] + NADH + H(+). It functions in the pathway lipid metabolism; fatty acid biosynthesis. Involved in the final reduction of the elongation cycle of fatty acid synthesis (FAS II). Catalyzes the reduction of a carbon-carbon double bond in an enoyl moiety that is covalently linked to an acyl carrier protein (ACP). The chain is Enoyl-[acyl-carrier-protein] reductase [NADH] from Burkholderia pseudomallei (strain K96243).